Consider the following 359-residue polypeptide: Peptide chain release factor 1 (359 aa).

Q236 carries the post-translational modification N5-methylglutamine.

Belongs to the prokaryotic/mitochondrial release factor family. Methylated by PrmC. Methylation increases the termination efficiency of RF1.

It is found in the cytoplasm. In terms of biological role, peptide chain release factor 1 directs the termination of translation in response to the peptide chain termination codons UAG and UAA. The sequence is that of Peptide chain release factor 1 from Streptococcus pneumoniae serotype 19F (strain G54).